We begin with the raw amino-acid sequence, 290 residues long: MKRIKCNKVRTVTEIVNSDEKIQKTYELAEFDLKNLSSLESYETLKIKLALSKYMAMLSTLEMTQPLLEIFRNKADTRQIAAVVFSTLAFIHNRFHPLVTNFTNKMEFVVTETNDTSIPGEPILFTENEGVLLCSVDRPSIVKMLSREFDTEALVNFENDNCNVRIAKTFGASKRKNTTRSDDYESNKQPNYDMDLSDFSITEVEATQYLTLLLTVEHAYLHYYIFKNYGVFEYCKSLTDHSLFTNKLRSTMSTKTSNLLLSKFKFTIEDFDKINSNSVTSGFNIYNFNK.

It belongs to the baculoviridae E27 family. In terms of assembly, interacts with host mus209/PCNA, cdc2 and cdk6. Forms a complex with proteins C42 and p78/83.

It localises to the virion membrane. Acts as a cyclin-like protein and plays a role in the modulation of host cell cycle. May promote G2/S arrest by interacting with host mus209/PCNA, cdc2 and cdk6. The cell cycle arrest is characterized by an intact nuclear envelope, concomitant with sustained activity of host cdc2. However, viral DNA replication still occurs in the arrested cells. This is Occlusion-derived virus envelope protein E27 (E27) from Lepidoptera (butterflies and moths).